A 291-amino-acid chain; its full sequence is Pyridoxal 5'-phosphate synthase subunit PdxS (291 aa).

D-ribose 5-phosphate is bound at residue D23. The Schiff-base intermediate with D-ribose 5-phosphate role is filled by K80. G152 is a binding site for D-ribose 5-phosphate. A D-glyceraldehyde 3-phosphate-binding site is contributed by R164. Residues G213 and 234–235 (GS) each bind D-ribose 5-phosphate.

Belongs to the PdxS/SNZ family. As to quaternary structure, in the presence of PdxT, forms a dodecamer of heterodimers.

It catalyses the reaction aldehydo-D-ribose 5-phosphate + D-glyceraldehyde 3-phosphate + L-glutamine = pyridoxal 5'-phosphate + L-glutamate + phosphate + 3 H2O + H(+). It functions in the pathway cofactor biosynthesis; pyridoxal 5'-phosphate biosynthesis. In terms of biological role, catalyzes the formation of pyridoxal 5'-phosphate from ribose 5-phosphate (RBP), glyceraldehyde 3-phosphate (G3P) and ammonia. The ammonia is provided by the PdxT subunit. Can also use ribulose 5-phosphate and dihydroxyacetone phosphate as substrates, resulting from enzyme-catalyzed isomerization of RBP and G3P, respectively. In Bifidobacterium longum (strain DJO10A), this protein is Pyridoxal 5'-phosphate synthase subunit PdxS.